We begin with the raw amino-acid sequence, 319 residues long: ATP-dependent 6-phosphofructokinase (319 aa).

Gly-11 lines the ATP pocket. ADP is bound at residue 21 to 25 (RAVVR). ATP is bound by residues 72-73 (RY) and 102-105 (GDGS). Residue Asp-103 coordinates Mg(2+). A substrate-binding site is contributed by 125-127 (TID). The Proton acceptor role is filled by Asp-127. An ADP-binding site is contributed by Arg-154. Substrate-binding positions include Arg-162 and 169-171 (MGR). ADP is bound by residues 185-187 (GAE), Arg-211, and 213-215 (KKH). Substrate-binding positions include Glu-222, Arg-243, and 249-252 (HVQR).

This sequence belongs to the phosphofructokinase type A (PFKA) family. ATP-dependent PFK group I subfamily. Prokaryotic clade 'B1' sub-subfamily. In terms of assembly, homotetramer. It depends on Mg(2+) as a cofactor.

The protein resides in the cytoplasm. It carries out the reaction beta-D-fructose 6-phosphate + ATP = beta-D-fructose 1,6-bisphosphate + ADP + H(+). Its pathway is carbohydrate degradation; glycolysis; D-glyceraldehyde 3-phosphate and glycerone phosphate from D-glucose: step 3/4. With respect to regulation, allosterically activated by ADP and other diphosphonucleosides, and allosterically inhibited by phosphoenolpyruvate. Its function is as follows. Catalyzes the phosphorylation of D-fructose 6-phosphate to fructose 1,6-bisphosphate by ATP, the first committing step of glycolysis. The polypeptide is ATP-dependent 6-phosphofructokinase (Listeria monocytogenes serotype 4b (strain CLIP80459)).